Here is a 291-residue protein sequence, read N- to C-terminus: uncharacterized protein (291 aa).

3 disordered regions span residues Met1–Lys62, Pro220–Val242, and Glu255–Lys291. The span at Glu18–Ser41 shows a compositional bias: basic and acidic residues. 2 stretches are compositionally biased toward polar residues: residues Glu42–Asp58 and Pro226–Pro236. At Ser267 the chain carries Phosphoserine.

It localises to the cytoplasm. It is found in the nucleus. This is an uncharacterized protein from Saccharomyces cerevisiae (strain ATCC 204508 / S288c) (Baker's yeast).